A 403-amino-acid chain; its full sequence is MLLPFPATMISEVEQPKEKRSLSSEPPSLMSLPYEIIENILARISKWSYPNLSLVSKSFLSLLSSPQLYKTRSEIGTTEPCLYFCLESANHSSPQWYTLWMKPDETLTGTGTIHDYSLIPLPSSSPVLRTSTVAVGSEIYVIGGHFNRSSSVRIFDCRSNTWRDGPNMTVARSDPVAVLIDQRIYVLGGREMDESDDWFEVFDIKTQTWRALPSFRAGLELRRYIVWPNRYFPRLGDSQTAVRLINVNPNALEGKLYVAAQINDYTYEPKDDTWKVVSKSSIRRVKVWCVIENVMYACHDVFLRWYDYEDRRWREIQGLEELCYHPTRGFSGAERIVNYGGKLVVMWRPVQSDGKDKIEIWCAQIALEKRSKDEIWGKIEWINSVLTVPKLCDLCYSCVVVSI.

Positions 26-72 (PPSLMSLPYEIIENILARISKWSYPNLSLVSKSFLSLLSSPQLYKTR) constitute an F-box domain. Kelch repeat units lie at residues 138-182 (EIYV…LIDQ), 184-229 (IYVL…VWPN), 248-294 (NPNA…IENV), and 296-340 (YACH…VNYG).

This chain is F-box/kelch-repeat protein At5g39560, found in Arabidopsis thaliana (Mouse-ear cress).